We begin with the raw amino-acid sequence, 278 residues long: Energy-coupling factor transporter ATP-binding protein EcfA1 (278 aa).

The ABC transporter domain maps to 5-239 (IRVQHLNYTY…GMELLRLGLD (235 aa)). 39–46 (GHNGSGKS) serves as a coordination point for ATP. E165 (proton acceptor) is an active-site residue.

Belongs to the ABC transporter superfamily. Energy-coupling factor EcfA family. Forms a stable energy-coupling factor (ECF) transporter complex probably composed of 2 membrane-embedded substrate-binding proteins (S component), 2 ATP-binding proteins (A component) and 2 transmembrane proteins (T component). This complex interacts with a number of substrate-specific components, including FolT and ThiT for 5-formyltetrahydrofolate and thiamine respectively.

Its subcellular location is the cell membrane. ATP-binding (A) component of a common energy-coupling factor (ECF) ABC-transporter complex. Unlike classic ABC transporters this ECF transporter provides the energy necessary to transport a number of different substrates including 5-formyltetrahydrofolate and thiamine. Expression of the complex plus FolT or ThiT in Lactococcus lactis subsp. cremoris (strain NZ9000) allows 5-formyltetrahydrofolate or thiamine uptake respectively; 5-formyltetrahydrofolate or thiamine are not taken up in the absence of FolT/ThiT or the EcfA1A2T complex. Deenergized L.lactis subsp. cremoris (treated with 2-deoxyglucose) does not take up substrate. The sequence is that of Energy-coupling factor transporter ATP-binding protein EcfA1 from Lacticaseibacillus paracasei (strain ATCC 334 / BCRC 17002 / CCUG 31169 / CIP 107868 / KCTC 3260 / NRRL B-441) (Lactobacillus paracasei).